The following is a 102-amino-acid chain: DET1- and DDB1-associated protein 1 (102 aa).

Residue alanine 2 is modified to N-acetylalanine. 2 positions are modified to phosphoserine: serine 33 and serine 95. Positions 67-102 (NAAKKRDQEQVEAEGESSAPPRKVARTDSPDMPEDT) are disordered.

It belongs to the DDA1 family. In terms of assembly, component of numerous DCX (DDB1-CUL4-X-box) E3 ubiquitin-protein ligase complexes which consist of a core of DDB1, cullin-4 (CUL4A or CUL4B), DDA1 and RBX1. Component of the DCX(DCAF15) complex, also named CLR4(DCAF15) complex, composed of DCAF15, DDB1, cullin-4 (CUL4A or CUL4B), DDA1 and RBX1. Part of the DDD core complex containing DET1, DDA1 and DDB1; the DDD core complex recruits a specific UBE2E enzyme, such as UBE2E1, UBE2E2 UBE2E3, to form specific DDD-E2 complexes.

Its pathway is protein modification; protein ubiquitination. Its function is as follows. Functions as a component of numerous distinct DCX (DDB1-CUL4-X-box) E3 ubiquitin-protein ligase complexes which mediate the ubiquitination and subsequent proteasomal degradation of target proteins. In the DCX complexes, acts as a scaffolding subunit required to stabilize the complex. The protein is DET1- and DDB1-associated protein 1 of Mus musculus (Mouse).